Here is a 29-residue protein sequence, read N- to C-terminus: Cyclotide mela-3 (29 aa).

A cross-link (cyclopeptide (Gly-Asp)) is located at residues 1–29 (GKPICGETCFKGKCYTPGCTCSYPICKKD). Cystine bridges form between Cys5/Cys19, Cys9/Cys21, and Cys14/Cys26.

This is a cyclic peptide. Post-translationally, contains 3 disulfide bonds.

Its function is as follows. Probably participates in a plant defense mechanism (Potential). Binds to and induces leakage in phospholipd membranes, particularly ones containing 1-palmitoyl-2-oleophosphatidylethanolamine (POPE). In vitro, displays cytotoxicity against cultured cells. Not active against Gram-negative bacterium E.coli ATCC 25922 or Gram-positive bacterium S.aureus ATCC 25923 up to a concentration of 64 uM. In Melicytus latifolius (Norfolk Island mahoe), this protein is Cyclotide mela-3.